Consider the following 188-residue polypeptide: Calcium load-activated calcium channel (188 aa).

Over 1–4 (MSTM) the chain is Lumenal. A helical transmembrane segment spans residues 5-32 (FADTLLIVFISVCTALLAEGITWVLVYR). A coiled-coil region spans residues 32 to 89 (RTDKYKRLKAEVEKQSKKLEKKKETITESAGRQQKKKIERQEEKLKNNNRDLSMVRMK). Topologically, residues 33 to 86 (TDKYKRLKAEVEKQSKKLEKKKETITESAGRQQKKKIERQEEKLKNNNRDLSMV) are cytoplasmic. Phosphoserine is present on Ser60. Residues 87–106 (RMKSMFAIGFCFTALMGMFN) form a helical membrane-spanning segment. Residues 107–120 (SIFDGRVVAKLPFT) are Lumenal-facing. The stretch at 121–130 (PLSYIQGLSH) is an intramembrane region. Topologically, residues 131-140 (RNLLGDDTTD) are lumenal. A helical membrane pass occupies residues 141-162 (CSFIFLYILCTMSIRQNIQKIL). Over 163–188 (GLAPSRAATKQAGGFLGPPPPSGKFS) the chain is Cytoplasmic. Ser188 carries the post-translational modification Phosphoserine.

This sequence belongs to the TMCO1 family. Homodimer and homotetramer. Homodimer under resting conditions; forms homotetramers following ER calcium overload. Component of the GET- and EMC-like (GEL) complex, composed of RAB5IF/OPTI and TMCO1. The GEL complex is part of the multi-pass translocon (MPT) complex, composed of three subcomplexes, the GEL complex (composed of RAB5IF/OPTI and TMCO1), the BOS complex (composed of NCLN/Nicalin, NOMO1 and TMEM147) and the PAT complex (composed of WDR83OS/Asterix and CCDC47). The MPT complex associates with the SEC61 complex.

It is found in the endoplasmic reticulum membrane. The protein resides in the golgi apparatus membrane. The protein localises to the mitochondrion membrane. The enzyme catalyses Ca(2+)(in) = Ca(2+)(out). In terms of biological role, endoplasmic reticulum (ER) calcium-selective channel preventing intracellular Ca2(+) stores from overfilling and maintaining calcium homeostasis in the ER. In response to endoplasmic reticulum (ER) Ca2(+) overloading, assembles into a homotetramer, forming a functional calcium-selective channel facilitating Ca2(+) release. Mediates ER Ca2(+) homeostasis in osteoblasts and plays a key role in bone formation, via the CaMKII-HDAC4-RUNX2 signaling axis. Component of the multi-pass translocon (MPT) complex that mediates insertion of multi-pass membrane proteins into the lipid bilayer of membranes. The MPT complex takes over after the SEC61 complex: following membrane insertion of the first few transmembrane segments of proteins by the SEC61 complex, the MPT complex occludes the lateral gate of the SEC61 complex to promote insertion of subsequent transmembrane regions. Within the MPT complex, the GEL subcomplex may mediate insertion of transmembrane regions into the membrane. The sequence is that of Calcium load-activated calcium channel from Bos taurus (Bovine).